A 61-amino-acid chain; its full sequence is Photosystem II reaction center protein K (61 aa).

Residues 1–24 constitute a propeptide that is removed on maturation; that stretch reads MINIFSFICIYLHSALYSSSFFFG. A helical membrane pass occupies residues 40 to 60; it reads MPVIPLFFFLLAFVWQAAVSF.

The protein belongs to the PsbK family. As to quaternary structure, PSII is composed of 1 copy each of membrane proteins PsbA, PsbB, PsbC, PsbD, PsbE, PsbF, PsbH, PsbI, PsbJ, PsbK, PsbL, PsbM, PsbT, PsbX, PsbY, PsbZ, Psb30/Ycf12, at least 3 peripheral proteins of the oxygen-evolving complex and a large number of cofactors. It forms dimeric complexes.

The protein localises to the plastid. It localises to the chloroplast thylakoid membrane. In terms of biological role, one of the components of the core complex of photosystem II (PSII). PSII is a light-driven water:plastoquinone oxidoreductase that uses light energy to abstract electrons from H(2)O, generating O(2) and a proton gradient subsequently used for ATP formation. It consists of a core antenna complex that captures photons, and an electron transfer chain that converts photonic excitation into a charge separation. The polypeptide is Photosystem II reaction center protein K (Pelargonium hortorum (Common geranium)).